The chain runs to 343 residues: tRNA N6-adenosine threonylcarbamoyltransferase (343 aa).

Histidine 116 and histidine 120 together coordinate Fe cation. Substrate-binding positions include 138–142, aspartate 172, glycine 185, aspartate 189, and asparagine 277; that span reads LVSGG. Residue aspartate 305 coordinates Fe cation.

The protein belongs to the KAE1 / TsaD family. The cofactor is Fe(2+).

The protein localises to the cytoplasm. The catalysed reaction is L-threonylcarbamoyladenylate + adenosine(37) in tRNA = N(6)-L-threonylcarbamoyladenosine(37) in tRNA + AMP + H(+). Functionally, required for the formation of a threonylcarbamoyl group on adenosine at position 37 (t(6)A37) in tRNAs that read codons beginning with adenine. Is involved in the transfer of the threonylcarbamoyl moiety of threonylcarbamoyl-AMP (TC-AMP) to the N6 group of A37, together with TsaE and TsaB. TsaD likely plays a direct catalytic role in this reaction. This chain is tRNA N6-adenosine threonylcarbamoyltransferase, found in Mycobacterium ulcerans (strain Agy99).